The sequence spans 187 residues: Large ribosomal subunit protein uL6 (187 aa).

The interval 159–187 (PYKGKGIRYKGEQLSSNPERLQVRSKEVR) is disordered.

This sequence belongs to the universal ribosomal protein uL6 family. Part of the 50S ribosomal subunit.

Its function is as follows. This protein binds to the 23S rRNA, and is important in its secondary structure. It is located near the subunit interface in the base of the L7/L12 stalk, and near the tRNA binding site of the peptidyltransferase center. The polypeptide is Large ribosomal subunit protein uL6 (Aquifex pyrophilus).